Reading from the N-terminus, the 198-residue chain is Elongation factor Ts (198 aa).

The tract at residues 81–84 (TDFV) is involved in Mg(2+) ion dislocation from EF-Tu.

It belongs to the EF-Ts family.

Its subcellular location is the cytoplasm. In terms of biological role, associates with the EF-Tu.GDP complex and induces the exchange of GDP to GTP. It remains bound to the aminoacyl-tRNA.EF-Tu.GTP complex up to the GTP hydrolysis stage on the ribosome. This Leptospira biflexa serovar Patoc (strain Patoc 1 / Ames) protein is Elongation factor Ts.